A 502-amino-acid chain; its full sequence is MSIRAEEISALIKQQIENYQSEIEVSDVGTVIQVGDGIARAHGLDNVMAGELVEFSNGVMGLAQNLEENNVGIIILGPYTEIREGDEVRRTGRIMQVPVGKELIGRVVNPLGQPVDGLGPINTTNTRPIESPAPGVMDRKSVHEPLQTGIKAIDALVPIGRGQRELIIGDRQTGKTAVALDTIINQKDEDMICIYVAIGQKESTVRNVVETLRKHGALDYTIVVTASASQPAPLLYLAPYAGVTMGEEFMYNGKHVLVVYDDLSKQAAAYRELSLLLRRPPGREAYPGDVFYLHSRLLERAAKLSDARGGGSLTALPFIETQAGDVSAYIPTNVISITDGQIFLQSDLFFSGVRPAIDAGTSVSRVGGSAQIKAMSKVSGTLRLDLASYRELEAFAQFGSDLDKATQAKLNRGARTVEVLKQGLHKPLRVEKQVIILYALTRGFLDDIPVVDITRFEEEFHAWLDSNATDLLSEIRTTKKLADDDKFAAAINGFKKVFVASE.

The interval 115–135 is disordered; that stretch reads VDGLGPINTTNTRPIESPAPG. Position 169–176 (169–176) interacts with ATP; that stretch reads GDRQTGKT.

This sequence belongs to the ATPase alpha/beta chains family. F-type ATPases have 2 components, CF(1) - the catalytic core - and CF(0) - the membrane proton channel. CF(1) has five subunits: alpha(3), beta(3), gamma(1), delta(1), epsilon(1). CF(0) has three main subunits: a(1), b(2) and c(9-12). The alpha and beta chains form an alternating ring which encloses part of the gamma chain. CF(1) is attached to CF(0) by a central stalk formed by the gamma and epsilon chains, while a peripheral stalk is formed by the delta and b chains.

Its subcellular location is the cell membrane. It catalyses the reaction ATP + H2O + 4 H(+)(in) = ADP + phosphate + 5 H(+)(out). Produces ATP from ADP in the presence of a proton gradient across the membrane. The alpha chain is a regulatory subunit. This is ATP synthase subunit alpha from Bacillus mycoides (strain KBAB4) (Bacillus weihenstephanensis).